The sequence spans 866 residues: Primer-independent DNA polymerase PolB (866 aa).

Residues 50 to 286 form an exonuclease domain region; sequence SDLTLHIGFD…DRVPATIGAM (237 aa). Positions 287 to 385 are palm1 domain; it reads AVSRFTKTLK…GLLDILTPDY (99 aa). Residues 386–481 are TPR1 domain; it reads GNIRLSKNPD…NSESTSVFLP (96 aa). The interval 482-522 is fingers domain; that stretch reads FVQQVRENRNRHIKGSLEEKFWKEIGNSLYGKLAQGLRAKT. The tract at residues 523–549 is TPR2 domain; the sequence is AFDTARGLNRSLPPSSVTQPFFAAHVT. The segment at 550 to 678 is palm2 domain; the sequence is GFIRAVVGEL…PGQTLSRSTL (129 aa). A thumb domain region spans residues 679-866; that stretch reads ISTREMWLSE…RKYPTFCLPV (188 aa).

Requires Mn(2+) as cofactor.

It carries out the reaction DNA(n) + a 2'-deoxyribonucleoside 5'-triphosphate = DNA(n+1) + diphosphate. Its function is as follows. DNA polymerase with primer-independent templated DNA polymerization activity, primer-dependent DNA polymerization activity with strand displacement, translesion synthesis activity across non-bulky base damage, 3'-5' exodeoxyribonuclease activity, and de novo primer synthesis activity. The enzyme is processive and faithful. Translation synthesis across abasic sites is coupled to de novo primer synthesis. Overexpression of wild-type protein increases survival of cells upon mitomycin C or UV treatment. The protein is Primer-independent DNA polymerase PolB (pi-polB) of Escherichia coli.